A 76-amino-acid polypeptide reads, in one-letter code: Exodeoxyribonuclease 7 small subunit (76 aa).

Belongs to the XseB family. In terms of assembly, heterooligomer composed of large and small subunits.

It is found in the cytoplasm. The catalysed reaction is Exonucleolytic cleavage in either 5'- to 3'- or 3'- to 5'-direction to yield nucleoside 5'-phosphates.. Its function is as follows. Bidirectionally degrades single-stranded DNA into large acid-insoluble oligonucleotides, which are then degraded further into small acid-soluble oligonucleotides. In Latilactobacillus sakei subsp. sakei (strain 23K) (Lactobacillus sakei subsp. sakei), this protein is Exodeoxyribonuclease 7 small subunit.